We begin with the raw amino-acid sequence, 407 residues long: tRNA(Ile)-lysidine synthase (407 aa).

36–41 (SGGRDS) contributes to the ATP binding site.

This sequence belongs to the tRNA(Ile)-lysidine synthase family.

Its subcellular location is the cytoplasm. It catalyses the reaction cytidine(34) in tRNA(Ile2) + L-lysine + ATP = lysidine(34) in tRNA(Ile2) + AMP + diphosphate + H(+). Ligates lysine onto the cytidine present at position 34 of the AUA codon-specific tRNA(Ile) that contains the anticodon CAU, in an ATP-dependent manner. Cytidine is converted to lysidine, thus changing the amino acid specificity of the tRNA from methionine to isoleucine. This is tRNA(Ile)-lysidine synthase from Tropheryma whipplei (strain TW08/27) (Whipple's bacillus).